Here is a 373-residue protein sequence, read N- to C-terminus: Dual-specificity RNA methyltransferase RlmN (373 aa).

The Proton acceptor role is filled by Glu94. One can recognise a Radical SAM core domain in the interval 100-339 (EDDRATLCVS…VIVRKTRGDD (240 aa)). An intrachain disulfide couples Cys107 to Cys344. [4Fe-4S] cluster contacts are provided by Cys114, Cys118, and Cys121. S-adenosyl-L-methionine is bound by residues 168 to 169 (GE), Ser200, 222 to 224 (SIH), and Asn301. Catalysis depends on Cys344, which acts as the S-methylcysteine intermediate.

This sequence belongs to the radical SAM superfamily. RlmN family. The cofactor is [4Fe-4S] cluster.

The protein localises to the cytoplasm. It carries out the reaction adenosine(2503) in 23S rRNA + 2 reduced [2Fe-2S]-[ferredoxin] + 2 S-adenosyl-L-methionine = 2-methyladenosine(2503) in 23S rRNA + 5'-deoxyadenosine + L-methionine + 2 oxidized [2Fe-2S]-[ferredoxin] + S-adenosyl-L-homocysteine. It catalyses the reaction adenosine(37) in tRNA + 2 reduced [2Fe-2S]-[ferredoxin] + 2 S-adenosyl-L-methionine = 2-methyladenosine(37) in tRNA + 5'-deoxyadenosine + L-methionine + 2 oxidized [2Fe-2S]-[ferredoxin] + S-adenosyl-L-homocysteine. Functionally, specifically methylates position 2 of adenine 2503 in 23S rRNA and position 2 of adenine 37 in tRNAs. m2A2503 modification seems to play a crucial role in the proofreading step occurring at the peptidyl transferase center and thus would serve to optimize ribosomal fidelity. This chain is Dual-specificity RNA methyltransferase RlmN, found in Shewanella pealeana (strain ATCC 700345 / ANG-SQ1).